The sequence spans 342 residues: Delta(6)-protoilludene synthase (342 aa).

Asp81, Asn217, Ser221, and Glu225 together coordinate Mg(2+). The DDXXD motif signature appears at 81 to 85 (DEYSD). (2E,6E)-farnesyl diphosphate contacts are provided by Arg306 and Tyr307.

The protein belongs to the terpene synthase family. Requires Mg(2+) as cofactor.

The catalysed reaction is (2E,6E)-farnesyl diphosphate = Delta(6)-protoilludene + diphosphate. Delta(6)-protoilludene synthase, part of the gene cluster that mediates the biosynthesis of melleolides, a range of antifungal and phytotoxic polyketide derivatives composed of an orsellinic acid (OA) moiety esterified to various sesquiterpene alcohols. The first step in melleolides biosynthesis is performed by the delta(6)-protoilludene synthase PRO1 which catalyzes the cyclization of farnesyl diphosphate to protoilludene. The orsellinic acid synthase armB produces OA by condensing acetyl-CoA with 3 malonyl-CoA units in a three-round chain elongation reaction folowed by a C2-C7 ring closure. ArmB further catalyzes the trans-esterification of OA to the various sesquiterpene alcohols resulting from the hydroxylation of protoilludene. The melleolides cluster also includes 5 cytochrome P450 monooxygenases, 4 NAD(+)-dependent oxidoreductases, one flavin-dependent oxidoreductase, and one O-methyltransferase. The cytochrome P450 monooxygenases may be involved in protoilludene hydroxylation to elaborate melleolides with multiple alcohol groups, such as melleolide D, which carries alcohol functionalities at C-4, C-5, C-10, and C-13. The role of the NAD(+)-dependent enzymes remains unknown. Numerous melleolides, including arnamial, show 5'-O-methylation of the aromatic moiety which may be catalyzed by the methyltransferase encoded in the cluster. The flavin-dependent oxidoreductase might represent the dehydrogenase yielding the aldehyde in position 1 of arnamial and other melleolides. Finally, several halogenases, localized outside of the cluster, are able to catalyze the transfer of a single chlorine atom to the melleolide backbone, resulting in a 6'-chloromelleolide product. The polypeptide is Delta(6)-protoilludene synthase (Armillaria ostoyae (Armillaria root rot fungus)).